The sequence spans 610 residues: MSEIFDAKAFLKTVTSQPGVYRMYDAGGTVIYVGKAKDLKKRLSSYFRSNLASRKTEALVAQIQHIDVTVTHTETEALLLEHNYIKLYQPRYNVLLRDDKSYPFIFLSGDTHPRLAMHRGAKHAKGEYFGPFPNGYAVRETLALLQKIFPIRQCENSVYRNRSRPCLQYQIGRCLGPCVAGLVSEEEYAQQVEYVRLFLSGKDDQVLTQLIARMEKASQDLAFEEAARIRDQIQAVRRVTERQFVSNAGDDLDVIGVAFDAGMACVHVLFIRQGKVLGSRSYFPKVPGGTELGEVVETFVGQFYLQGSQMRTLPGEILLDFNLSDKTLLADSLSELAGRRIHVQTKPRGDRARYLKLARTNAATALITKLSQQSTITQRLTALAAVLKLPAIKRMECFDISHTMGEQTVASCVVFDANGPLRAEYRRYNIAGITPGDDYAAMNQVLRRRYGKAIEESKIPDVILIDGGKGQLAQAKAVFAELDVPWDKHHPLLLGVAKGADRKAGLETLFFEPEGEGFSLPPDSPALHVIQHIRDESHDHAIGGHRKKRAKVKNTSTLETIEGVGPKRRQMLLKYMGGLQGLRNASVEEIAKVPGISQGLAEKIFWSLKH.

The GIY-YIG domain occupies Ser16–Val94. The UVR domain maps to Asp204–Val239.

It belongs to the UvrC family. Interacts with UvrB in an incision complex.

It localises to the cytoplasm. The UvrABC repair system catalyzes the recognition and processing of DNA lesions. UvrC both incises the 5' and 3' sides of the lesion. The N-terminal half is responsible for the 3' incision and the C-terminal half is responsible for the 5' incision. The sequence is that of UvrABC system protein C from Salmonella agona (strain SL483).